The primary structure comprises 707 residues: Prolyl endopeptidase-like (707 aa).

Residues Ser538, Asp624, and His670 each act as charge relay system in the active site.

Belongs to the peptidase S9A family. As to quaternary structure, homodimer.

Its subcellular location is the cytoplasm. It is found in the cytosol. Serine peptidase whose precise substrate specificity remains unclear. Does not cleave peptides after a arginine or lysine residue. Regulates trans-Golgi network morphology and sorting by regulating the membrane binding of the AP-1 complex. May play a role in the regulation of synaptic vesicle exocytosis. This is Prolyl endopeptidase-like (prepl) from Xenopus laevis (African clawed frog).